Consider the following 836-residue polypeptide: Taste receptor type 1 member 2 (836 aa).

The N-terminal stretch at 1 to 19 (MGPRAKAVCSLFILLQVLA) is a signal peptide. The Extracellular segment spans residues 20–565 (EPAENSDFYL…AFLEWHEPST (546 aa)). 9 N-linked (GlcNAc...) asparagine glycosylation sites follow: N84, N292, N312, N351, N427, N479, N486, N526, and N546. The chain crosses the membrane as a helical span at residues 566–586 (IFVVMLTILGFLSTLAIMVIF). Over 587–601 (WRHLHTPVVRSAGGP) the chain is Cytoplasmic. The helical transmembrane segment at 602–622 (MCFLMLVPLLLAYAMVPMYIG) threads the bilayer. The Extracellular segment spans residues 623 to 634 (QPTFFSCLWRQT). The helical transmembrane segment at 635 to 655 (FFTLCFTICISCITVRSFQIV) threads the bilayer. Topologically, residues 656-680 (CIFKMARRLPRAYGYWVRCHGPYVF) are cytoplasmic. Residues 681-701 (VASFMVLKVVIVAGNVLATTA) traverse the membrane as a helical segment. Topologically, residues 702–724 (NPTARPDPDDPNIMVLSCNYRRA) are extracellular. A helical transmembrane segment spans residues 725-745 (LLFNTSLDLLLSVAGFSFAYM). The Cytoplasmic portion of the chain corresponds to 746-757 (GKELPTNYNEAK). A helical membrane pass occupies residues 758–778 (FITLCMTFYFTSSVSLCTFMS). At 779–781 (VYD) the chain is on the extracellular side. Residues 782–802 (GVLVTILDLLITVLNLLGISF) traverse the membrane as a helical segment. The Cytoplasmic portion of the chain corresponds to 803–836 (GYFGPKCYMVLFYPERNTQVYFSSMIQGYTMGKD).

This sequence belongs to the G-protein coupled receptor 3 family. TAS1R subfamily. As to quaternary structure, forms heterodimers with TAS1R3.

It is found in the cell membrane. In terms of biological role, putative taste receptor. TAS1R2/TAS1R3 recognizes diverse natural and synthetic sweeteners. The chain is Taste receptor type 1 member 2 (TAS1R2) from Canis lupus familiaris (Dog).